Consider the following 191-residue polypeptide: IMP cyclohydrolase (191 aa).

Belongs to the archaeal IMP cyclohydrolase family.

It carries out the reaction IMP + H2O = 5-formamido-1-(5-phospho-D-ribosyl)imidazole-4-carboxamide. It participates in purine metabolism; IMP biosynthesis via de novo pathway; IMP from 5-formamido-1-(5-phospho-D-ribosyl)imidazole-4-carboxamide: step 1/1. Its function is as follows. Catalyzes the cyclization of 5-formylamidoimidazole-4-carboxamide ribonucleotide to IMP. This chain is IMP cyclohydrolase, found in Natronomonas pharaonis (strain ATCC 35678 / DSM 2160 / CIP 103997 / JCM 8858 / NBRC 14720 / NCIMB 2260 / Gabara) (Halobacterium pharaonis).